Here is a 397-residue protein sequence, read N- to C-terminus: Gastric triacylglycerol lipase (397 aa).

A signal peptide spans Met-1 to Cys-19. N-linked (GlcNAc...) asparagine glycosylation is present at Asn-33. The 300-residue stretch at Pro-77–Trp-376 folds into the AB hydrolase-1 domain. Ser-171 (nucleophile) is an active-site residue. Cys-245 and Cys-254 are oxidised to a cystine. Residues Asn-270 and Asn-326 are each glycosylated (N-linked (GlcNAc...) asparagine). Residues Asp-342 and His-371 each act as charge relay system in the active site.

The protein belongs to the AB hydrolase superfamily. Lipase family.

It is found in the secreted. It carries out the reaction a triacylglycerol + H2O = a diacylglycerol + a fatty acid + H(+). The catalysed reaction is 1,2,3-tri-(9Z-octadecenoyl)-glycerol + H2O = 1,2-di-(9Z-octadecenoyl)-sn-glycerol + (9Z)-octadecenoate + H(+). The enzyme catalyses 1,2,3-trioctanoylglycerol + H2O = 1,2-dioctanoyl-sn-glycerol + octanoate + H(+). Its activity is regulated as follows. Inhibited by diethylp-nitrophenyl phosphate but not inhibited by thiol reagents 5,5'-dithiobis(2-nitrobenzoic acid) or 4,4'-dithiopyridine. In terms of biological role, catalyzes the hydrolysis of triacylglycerols to yield free fatty acids, diacylglycerol, monoacylglycerol, and glycerol. Shows a preferential hydrolysis at the sn-3 position of triacylglycerol. In Bos taurus (Bovine), this protein is Gastric triacylglycerol lipase (LIPF).